A 420-amino-acid polypeptide reads, in one-letter code: MMSLRICLLATCLLVAAHASKDASNDRLKPTKWLTATELENVPSLNDITWERLENQPLEQGAKVIEKIYHVGQIKHDLTPSFVPSPSNVPVWIIKSNGQKVECKLNNYVETAKAQPGFGEDEVTIVLTGLPKTSPAQQKAMRRLIQAYVQKYNLQQLQKNAQEQQQQLKSSDYDYTSSEEAADQWKSAKAASGDLIIIDLGSTLTNFKRYAMLDVLNTGAMIGQTLIDLTNKGVPQEIIHLIGQGISAHVAGAAGNKYTAQTGHKLRRITGLDPAKVLSKRPQILGGLSRGDADFVDAIHTSTFAMGTPIRCGDVDFYPNGPSTGVPGSENVIEAVARATRYFAESVRPGSERNFPAVPANSLKQYKEQDGFGKRAYMGLQIDYDLRGDYILEVNAKSPFGQRSPAHKQAAYHGMHHAQN.

Positions 1-19 (MMSLRICLLATCLLVAAHA) are cleaved as a signal peptide. Residue Thr37 is modified to Phosphothreonine. Phosphoserine occurs at positions 177 and 178. 2 positions are modified to sulfotyrosine: Tyr384 and Tyr390. The disordered stretch occupies residues 401 to 420 (GQRSPAHKQAAYHGMHHAQN).

Belongs to the AB hydrolase superfamily. Lipase family. In terms of processing, tyrosine sulfation occurs in the female only and plays an essential functional role. Synthesized in the fat body and ovarian follicle cells and accumulate in the oocyte.

It is found in the secreted. Its function is as follows. Vitellogenin is the major yolk protein of eggs where it is used as a food source during embryogenesis. Vitellogenins and their receptor yl/yolkless are required for maintenance of microtubule plus-end orientation towards the posterior pole of oocytes. Involved in polarized localization of germ plasm components, such as osk mRNA and vas protein, to the oocyte posterior cortex. Receptor-mediated endocytosis by yl/yolkless is crucial for actin reorganization, mediated by osk isoform A/Long, required to anchor germ plasm components to the oocyte cortex. The polypeptide is Vitellogenin-3 (Yp3) (Drosophila melanogaster (Fruit fly)).